Reading from the N-terminus, the 459-residue chain is Glutamate--isopropylamine ligase (459 aa).

The 97-residue stretch at 19 to 115 (HNIDTIRLGA…VLCDIQHLNG (97 aa)) folds into the GS beta-grasp domain. In terms of domain architecture, GS catalytic spans 122–459 (PRNLLRKAIE…WELARYLDII (338 aa)).

The protein belongs to the glutamine synthetase family.

The catalysed reaction is isopropylamine + L-glutamate + ATP = gamma-L-glutamyl-isopropylamide + ADP + phosphate + H(+). Functionally, involved in the degradation of isopropylamine, which is a constituent of the herbicides atrazine. Catalyzes the ATP-dependent formation of gamma-glutamyl-isopropylamide from isopropylamine and L-glutamate. It can also use aminoalkanes, amino-alcohols (L-alaninol and D-alaninol) and amino-esters as substrates. This chain is Glutamate--isopropylamine ligase (ipuC), found in Pseudomonas sp.